A 168-amino-acid polypeptide reads, in one-letter code: MATVASSAAVAVPSFTGLKASGSIKPTTAKIIPTTTAVPRLSVKASLKNVGAAVVATAAAGLLAGNAMAVEVLLGGGDGSLAFLPGDFSVASGEEIVFKNNAGFPHNVVFDEDEIPSGVDAAKISMSEEDLLNAPGETYKVTLTEKGTYKFYCSPHQGAGMVGKVTVN.

Residues 70-168 form the Plastocyanin-like domain; the sequence is VEVLLGGGDG…AGMVGKVTVN (99 aa). Residues His-106, Cys-153, His-156, and Met-161 each coordinate Cu cation.

This sequence belongs to the plastocyanin family. It depends on Cu(2+) as a cofactor.

It is found in the plastid. It localises to the chloroplast thylakoid membrane. Its function is as follows. Participates in electron transfer between P700 and the cytochrome b6-f complex in photosystem I. This is Plastocyanin, chloroplastic (PETE) from Spinacia oleracea (Spinach).